A 471-amino-acid chain; its full sequence is Glutamate--tRNA ligase (471 aa).

A 'HIGH' region motif is present at residues 9-19 (PSPTGYLHVGG). Zn(2+)-binding residues include Cys98, Cys100, Cys125, and His127. Positions 237-241 (KLSKR) match the 'KMSKS' region motif. Residue Lys240 coordinates ATP.

This sequence belongs to the class-I aminoacyl-tRNA synthetase family. Glutamate--tRNA ligase type 1 subfamily. Monomer. The cofactor is Zn(2+).

It localises to the cytoplasm. It carries out the reaction tRNA(Glu) + L-glutamate + ATP = L-glutamyl-tRNA(Glu) + AMP + diphosphate. Catalyzes the attachment of glutamate to tRNA(Glu) in a two-step reaction: glutamate is first activated by ATP to form Glu-AMP and then transferred to the acceptor end of tRNA(Glu). This chain is Glutamate--tRNA ligase, found in Salmonella schwarzengrund (strain CVM19633).